A 915-amino-acid chain; its full sequence is Coiled-coil domain-containing protein 57 (915 aa).

The centrosomal targeting domain stretch occupies residues methionine 1–glutamine 502. Coiled coils occupy residues valine 92–glutamate 173, leucine 214–aspartate 422, lysine 456–glutamate 483, and isoleucine 521–glutamine 548. 3 disordered regions span residues threonine 555–alanine 574, proline 606–proline 653, and glutamine 724–aspartate 915. Residues proline 606–aspartate 915 are microtubule binding domain. The segment covering histidine 613–threonine 627 has biased composition (polar residues). Over residues glycine 628–glycine 652 the composition is skewed to low complexity. Basic and acidic residues predominate over residues glycine 745–serine 758. Composition is skewed to polar residues over residues proline 781–serine 794, serine 819–leucine 830, and serine 841–serine 852. Over residues lysine 879–alanine 891 the composition is skewed to low complexity.

Interacts with CEP63; the interaction is required for their location to proximal end of centrioles. Interacts with microtubules.

It is found in the cytoplasm. Its subcellular location is the cytoskeleton. It localises to the microtubule organizing center. The protein localises to the centrosome. The protein resides in the centriolar satellite. It is found in the centriole. Its subcellular location is the spindle. Pleiotropic regulator of centriole duplication, mitosis, and ciliogenesis. Critical interface between centrosome and microtubule-mediated cellular processes. Centriole duplication protein required for recruitment of CEP63, CEP152, and PLK4 to the centrosome. Independent of its centrosomal targeting, localizes to and interacts with microtubules and regulates microtubule nucleation, stability, and mitotic progression. This Homo sapiens (Human) protein is Coiled-coil domain-containing protein 57.